The chain runs to 136 residues: Peptide methionine sulfoxide reductase MsrB (136 aa).

Residues 9–136 (DAEWKALLAE…NSASLDFKPK (128 aa)) enclose the MsrB domain. 4 residues coordinate Zn(2+): Cys53, Cys56, Cys102, and Cys105. The active-site Nucleophile is Cys125.

It belongs to the MsrB Met sulfoxide reductase family. It depends on Zn(2+) as a cofactor.

It catalyses the reaction L-methionyl-[protein] + [thioredoxin]-disulfide + H2O = L-methionyl-(R)-S-oxide-[protein] + [thioredoxin]-dithiol. The sequence is that of Peptide methionine sulfoxide reductase MsrB from Polaromonas sp. (strain JS666 / ATCC BAA-500).